The primary structure comprises 1100 residues: MAEQTQLAPAAFHLPDLVAIQRNSFRWFLEEGLIEELESFSPITDYTGKLELHFLGKQYKLKRPKYDVDEAKRRDGTYSVQMYVPTRLINKETGEIKEQEVFIGDLPLMTDRGTFIINGAERVIVNQIVRSPGVYYKSERDKNGRLTHNASLIPNRGAWLKFETDKNGLVWVRIDKTRKLSAQVLLKALGLSDNEIYDKLRHPEYYQKTIDKEGQFSEDEALMELYRKLRPGEPPTVSGGQQLLESRFFDPKRYDLGRVGRYKLNKKLGLNVADTVRTLTSEDILAAIDYLINLELDLGGCEVDDIDHLGNRRVRSVGELLQNQVRVGLNRLERIIRERMTVSDSDSLSPASLVNPKPLVAAIKEFFGSSQLSQFMDQTNPLAELTHKRRLSALGPGGLTRERAGFAVRDIHPSHYGRICPIETPEGPNAGLIGSLATHARVNDYGFIETPFWRVEEGRVRKDLAPVYMTADQEDDLRVAPGDVATDDAGYILGTTIPVRYRQDFTTTTPERVDYVALSPVQIISVATSLIPFLEHDDANRALMGSNMQRQAVPLLRPERPLVGTGLEPQAARDSGMVITSPVDGTISYVDATHIEVTADTGEKYGYALQKYQRSNQDTCLNQRPIVFEGDRVQRGQVIADGSATEKGELALGQNILVAYMPWEGYNYEDAILISERLVYDDVYTSIHIEKFEIEARQTKLGPEEITREIPNVGEDALRQLDENGIIRVGAWVESGDILVGKVTPKGESDQPPEEKLLRAIFGEKARDVRDNSLRVPNGEKGRVVDVRLFTREQGDELPPGANMVVRVYVAQKRKIQVGDKMAGRHGNKGIISRILPCEDMPYLPDGTPLDIVLNPLGVPSRMNVGQVFECMLGWAGQLLDARFKVTPFDEMYGAEASRLTVNAKLSEAREQTGQPWVFSDDEPGKIQVYDGRTGEPFDRPVTVGRAYMLKLVHLVDDKIHARSTGPYSLVTQQPLGGKAQQGGQRFGEMEVWALEAYGAAYILQELLTVKSDDMQGRNEALNAIVKGKAIPRPGTPESFKVLMRELQSLCLDIAVYKASTEDYEEDKEVDLMADVNQRRTPSRPTYESMSVGDIDDDDD.

The interval tyrosine 1064 to aspartate 1100 is disordered. The span at arginine 1079–serine 1089 shows a compositional bias: polar residues.

Belongs to the RNA polymerase beta chain family. As to quaternary structure, in cyanobacteria the RNAP catalytic core is composed of 2 alpha, 1 beta, 1 beta', 1 gamma and 1 omega subunit. When a sigma factor is associated with the core the holoenzyme is formed, which can initiate transcription.

It catalyses the reaction RNA(n) + a ribonucleoside 5'-triphosphate = RNA(n+1) + diphosphate. Its function is as follows. DNA-dependent RNA polymerase catalyzes the transcription of DNA into RNA using the four ribonucleoside triphosphates as substrates. This Synechococcus elongatus (strain ATCC 33912 / PCC 7942 / FACHB-805) (Anacystis nidulans R2) protein is DNA-directed RNA polymerase subunit beta.